Reading from the N-terminus, the 67-residue chain is Large ribosomal subunit protein bL32 (67 aa).

Basic residues predominate over residues 1–19; that stretch reads MAVPKRKMSRANTRARRAQ. A disordered region spans residues 1 to 20; the sequence is MAVPKRKMSRANTRARRAQW.

Belongs to the bacterial ribosomal protein bL32 family.

This is Large ribosomal subunit protein bL32 from Paenarthrobacter aurescens (strain TC1).